Reading from the N-terminus, the 423-residue chain is Putative competence-damage inducible protein (423 aa).

Belongs to the CinA family.

This is Putative competence-damage inducible protein from Streptococcus pyogenes serotype M4 (strain MGAS10750).